The sequence spans 199 residues: Holliday junction branch migration complex subunit RuvA (199 aa).

Residues 1-63 are domain I; the sequence is MIGCLIGEVF…EDAQQLYGFS (63 aa). Residues 64-142 are domain II; sequence DAQEKTIFRT…TLAQGTSSAA (79 aa). The segment at 143-150 is flexible linker; the sequence is ALPQIQFV. The interval 150–199 is domain III; it reads VSNSPVAEAEAALQSLGYKPLEAQKAVAAVKADYTESADIIRAALKSMMK.

It belongs to the RuvA family. As to quaternary structure, homotetramer. Forms an RuvA(8)-RuvB(12)-Holliday junction (HJ) complex. HJ DNA is sandwiched between 2 RuvA tetramers; dsDNA enters through RuvA and exits via RuvB. An RuvB hexamer assembles on each DNA strand where it exits the tetramer. Each RuvB hexamer is contacted by two RuvA subunits (via domain III) on 2 adjacent RuvB subunits; this complex drives branch migration. In the full resolvosome a probable DNA-RuvA(4)-RuvB(12)-RuvC(2) complex forms which resolves the HJ.

The protein localises to the cytoplasm. Its function is as follows. The RuvA-RuvB-RuvC complex processes Holliday junction (HJ) DNA during genetic recombination and DNA repair, while the RuvA-RuvB complex plays an important role in the rescue of blocked DNA replication forks via replication fork reversal (RFR). RuvA specifically binds to HJ cruciform DNA, conferring on it an open structure. The RuvB hexamer acts as an ATP-dependent pump, pulling dsDNA into and through the RuvAB complex. HJ branch migration allows RuvC to scan DNA until it finds its consensus sequence, where it cleaves and resolves the cruciform DNA. The polypeptide is Holliday junction branch migration complex subunit RuvA (Acinetobacter baumannii (strain AB307-0294)).